A 461-amino-acid chain; its full sequence is Cysteine--tRNA ligase (461 aa).

Position 28 (Cys28) interacts with Zn(2+). Positions 30–40 (ITVYDLCHIGH) match the 'HIGH' region motif. 3 residues coordinate Zn(2+): Cys209, His234, and Glu238. A 'KMSKS' region motif is present at residues 266-270 (KMSKS). Lys269 is an ATP binding site.

It belongs to the class-I aminoacyl-tRNA synthetase family. In terms of assembly, monomer. It depends on Zn(2+) as a cofactor.

The protein localises to the cytoplasm. The enzyme catalyses tRNA(Cys) + L-cysteine + ATP = L-cysteinyl-tRNA(Cys) + AMP + diphosphate. This chain is Cysteine--tRNA ligase, found in Salmonella arizonae (strain ATCC BAA-731 / CDC346-86 / RSK2980).